Here is a 148-residue protein sequence, read N- to C-terminus: Large-conductance mechanosensitive channel (148 aa).

3 helical membrane-spanning segments follow: residues 21–41 (IDLA…DSVV), 45–65 (IMPL…KFLV), and 92–112 (GNFL…FIIV).

This sequence belongs to the MscL family. As to quaternary structure, homopentamer.

Its subcellular location is the cell inner membrane. Channel that opens in response to stretch forces in the membrane lipid bilayer. May participate in the regulation of osmotic pressure changes within the cell. The sequence is that of Large-conductance mechanosensitive channel from Bordetella petrii (strain ATCC BAA-461 / DSM 12804 / CCUG 43448).